The chain runs to 364 residues: Large ribosomal subunit protein uL22m (364 aa).

The protein belongs to the universal ribosomal protein uL22 family. As to quaternary structure, component of the mitochondrial large ribosomal subunit (mt-LSU). Mature N.crassa 74S mitochondrial ribosomes consist of a small (37S) and a large (54S) subunit. The 37S small subunit contains a 16S ribosomal RNA (16S mt-rRNA) and 32 different proteins. The 54S large subunit contains a 23S rRNA (23S mt-rRNA) and 42 different proteins. uL22m forms the wall of the exit tunnel.

The protein localises to the mitochondrion. Its function is as follows. Component of the mitochondrial ribosome (mitoribosome), a dedicated translation machinery responsible for the synthesis of mitochondrial genome-encoded proteins, including at least some of the essential transmembrane subunits of the mitochondrial respiratory chain. The mitoribosomes are attached to the mitochondrial inner membrane and translation products are cotranslationally integrated into the membrane. The chain is Large ribosomal subunit protein uL22m (mrpl22) from Neurospora crassa (strain ATCC 24698 / 74-OR23-1A / CBS 708.71 / DSM 1257 / FGSC 987).